Consider the following 165-residue polypeptide: Small histone ubiquitination factor 1 (165 aa).

Positions 1-17 (MSSRRNDYHYDGNDHQY) are enriched in basic and acidic residues. Residues 1–86 (MSSRRNDYHY…STRASFGAAS (86 aa)) form a disordered region. 2 stretches are compositionally biased toward low complexity: residues 29–38 (SFYESSYRSR) and 50–60 (SSYDSPSSSTN). Polar residues predominate over residues 73 to 86 (PSNNSTRASFGAAS).

Component of the histone H2B ubiquitin ligase complex (HULC) composed of at least brl1, brl2, rhp6 and shf1.

It localises to the nucleus. The protein localises to the cytoplasm. It is found in the cytoskeleton. The protein resides in the microtubule organizing center. Its subcellular location is the spindle pole body. Its function is as follows. Component of the histone H2B ubiquitin ligase complex (HULC) which plays a role in transcription regulation by catalyzing the monoubiquitination of histone H2B to form H2BK123ub1. H2BK123ub1 gives a specific tag for epigenetic transcriptional activation and is also a prerequisite for H3K4me and H3K79me formation. This Schizosaccharomyces pombe (strain 972 / ATCC 24843) (Fission yeast) protein is Small histone ubiquitination factor 1 (shf1).